A 220-amino-acid chain; its full sequence is Protein US2 homolog (220 aa).

Belongs to the herpesviridae US2 family.

This chain is Protein US2 homolog, found in Bovine herpesvirus 1.2 (strain ST) (BoHV-1).